The primary structure comprises 289 residues: 4-diphosphocytidyl-2-C-methyl-D-erythritol kinase (289 aa).

Lys10 is a catalytic residue. 94 to 104 provides a ligand contact to ATP; it reads PVAAGLAGGSS. Asp136 is an active-site residue.

Belongs to the GHMP kinase family. IspE subfamily.

It catalyses the reaction 4-CDP-2-C-methyl-D-erythritol + ATP = 4-CDP-2-C-methyl-D-erythritol 2-phosphate + ADP + H(+). The protein operates within isoprenoid biosynthesis; isopentenyl diphosphate biosynthesis via DXP pathway; isopentenyl diphosphate from 1-deoxy-D-xylulose 5-phosphate: step 3/6. Its function is as follows. Catalyzes the phosphorylation of the position 2 hydroxy group of 4-diphosphocytidyl-2C-methyl-D-erythritol. In Bacillus cereus (strain G9842), this protein is 4-diphosphocytidyl-2-C-methyl-D-erythritol kinase.